A 549-amino-acid chain; its full sequence is Glucose-6-phosphate isomerase (549 aa).

The Proton donor role is filled by E353. Catalysis depends on residues H384 and K510. The interval 523-549 (AEPPAAQSDSSTDALVRRYRSERGRTA) is disordered. Over residues 537–549 (LVRRYRSERGRTA) the composition is skewed to basic and acidic residues.

This sequence belongs to the GPI family.

The protein localises to the cytoplasm. It carries out the reaction alpha-D-glucose 6-phosphate = beta-D-fructose 6-phosphate. It functions in the pathway carbohydrate biosynthesis; gluconeogenesis. The protein operates within carbohydrate degradation; glycolysis; D-glyceraldehyde 3-phosphate and glycerone phosphate from D-glucose: step 2/4. Catalyzes the reversible isomerization of glucose-6-phosphate to fructose-6-phosphate. In Mycolicibacterium gilvum (strain PYR-GCK) (Mycobacterium gilvum (strain PYR-GCK)), this protein is Glucose-6-phosphate isomerase.